A 310-amino-acid polypeptide reads, in one-letter code: MFNHVTVLLKETVDGLDIKPDGTYVDCTLGGGGHSSYLLSQLTEGGRLIAFDQDEIAIQNAKEKFSSYGEQFITVKSNFRYLSEKLQELGITEVDGILFDLGVSSPQLDTPERGFSYHHDAPLDMRMDQDAPLTAYDVVNSWSYEQLVRIFFQYGEEKFSKQIARKIEAYRENKAIETTGELVELIKEGIPAPARRTGGHPAKRVFQAIRIAVNDELKVFEEALESAIEMVKPGGRVSVITFHSLEDRICKTTFKRNSTTPQLPPGLPIIPDEFKPKLKLITRKPILPSDIELEENNRARSAKLRIAEKR.

S-adenosyl-L-methionine contacts are provided by residues 32-34 (GGH), aspartate 52, phenylalanine 79, aspartate 100, and glutamine 107.

It belongs to the methyltransferase superfamily. RsmH family.

It is found in the cytoplasm. It carries out the reaction cytidine(1402) in 16S rRNA + S-adenosyl-L-methionine = N(4)-methylcytidine(1402) in 16S rRNA + S-adenosyl-L-homocysteine + H(+). Functionally, specifically methylates the N4 position of cytidine in position 1402 (C1402) of 16S rRNA. This chain is Ribosomal RNA small subunit methyltransferase H, found in Bacillus anthracis (strain A0248).